We begin with the raw amino-acid sequence, 245 residues long: Terpene cyclase esdpB (245 aa).

7 helical membrane-spanning segments follow: residues 19–39 (MVAS…VTTI), 48–68 (SGVT…FAVI), 75–95 (IAAL…YVSV), 112–132 (LPVV…ALSM), 140–160 (LYWG…GLLI), 177–197 (FIAS…WPSA), and 208–228 (WLSG…YHIS).

This sequence belongs to the paxB family.

Its subcellular location is the membrane. It participates in secondary metabolite biosynthesis; terpenoid biosynthesis. Functionally, terpene cyclase; part of the cluster that mediates the biosynthesis of shearones, diterpenoid pyrones (DPs) which are structurally diverse meroterpenoids consisting of a diterpene linked by a pyrone, and which may exhibit a range of bioactivities. Within the pathway, esdpB takes part to the biosynthesis of the molecular scaffold by catalyzing the cyclization of the prenyl group initiated by protonation and ring-opening of the epoxide to produce the diterpenoid pyrone scaffold. The molecular scaffold is commonly biosynthesized by a series of enzymes including the non-reducing polyketide synthase (NR-PKS) esdpA that generates an alpha-pyrone; the prenyltransferase esdpC that attaches a geranylgeranyl pyrophosphate (GGPP) produced by the GGPP synthase (GGPPS) esdpD onto the pyrone unit; the FAD-dependent monooxygenase esdpE that converts an olefin on the diterpene unit into an epoxide; and the terpene cyclase esdpB that catalyzes the cyclization reactions to give the molecular backbone shearone A. In the modification steps, esdpF oxidizes the hydroxy group to a ketone at C-3 and esdpG then attaches hydroxy groups at both C-11 and C-12. After that, esdpI hydroxylates at C-20 and esdpH hydroxylates at C-6'. The ether bridge is generated by nucleophilic attack of the hydroxy group at C-20 to the carbonyl carbon at C-3. EsdpH can also functions prior to esdpI. The different combinations of these modification enzymes lead to the production of diverse shearone derivatives, shearone I being the end product of the pathway. The alpha-ketoglutarate-dependent dioxygenase esdpJ seems not to be involved in this pathway. The chain is Terpene cyclase esdpB from Penicillium shearii (Eupenicillium shearii).